Here is a 417-residue protein sequence, read N- to C-terminus: Phosphoglycerate kinase (417 aa).

The (2R)-3-phosphoglycerate site is built by valine 23, aspartate 24, phenylalanine 25, asparagine 26, glutamine 39, arginine 40, serine 63, histidine 64, glycine 66, arginine 67, leucine 122, arginine 123, histidine 170, and arginine 171. Glycine 214 lines the ADP pocket. Glycine 214 provides a ligand contact to CDP. The AMP site is built by alanine 215 and lysine 216. An ATP-binding site is contributed by alanine 215. Alanine 215 provides a ligand contact to Mg(2+). Aspartate 219 contacts CDP. Mg(2+) is bound at residue aspartate 219. An AMP-binding site is contributed by lysine 220. Lysine 220 contacts ATP. ADP is bound at residue glycine 238. Glycine 238 is a CDP binding site. AMP contacts are provided by glycine 239 and glycine 313. Positions 239 and 313 each coordinate ATP. CDP-binding residues include glycine 338 and phenylalanine 343. Phenylalanine 343 contributes to the ADP binding site. Glutamate 344 contacts AMP. The ATP site is built by glutamate 344, aspartate 375, and threonine 376. Aspartate 375 is a binding site for Mg(2+).

This sequence belongs to the phosphoglycerate kinase family. In terms of assembly, monomer. It depends on Mg(2+) as a cofactor.

It localises to the cytoplasm. It is found in the mitochondrion. The enzyme catalyses (2R)-3-phosphoglycerate + ATP = (2R)-3-phospho-glyceroyl phosphate + ADP. The protein operates within carbohydrate degradation; glycolysis; pyruvate from D-glyceraldehyde 3-phosphate: step 2/5. Functionally, catalyzes one of the two ATP producing reactions in the glycolytic pathway via the reversible conversion of 1,3-diphosphoglycerate to 3-phosphoglycerate. Both L- and D- forms of purine and pyrimidine nucleotides can be used as substrates, but the activity is much lower on pyrimidines. Negatively regulates the biosynthesis of acetyl-CoA from pyruvate in the mitochondrion. The polypeptide is Phosphoglycerate kinase (PGKA) (Penicillium citrinum).